The chain runs to 86 residues: CRISPR-associated endoribonuclease Cas2 (86 aa).

A Mg(2+)-binding site is contributed by Asp-8.

Belongs to the CRISPR-associated endoribonuclease Cas2 protein family. In terms of assembly, homodimer, forms a heterotetramer with a Cas1 homodimer. Mg(2+) serves as cofactor.

CRISPR (clustered regularly interspaced short palindromic repeat), is an adaptive immune system that provides protection against mobile genetic elements (viruses, transposable elements and conjugative plasmids). CRISPR clusters contain sequences complementary to antecedent mobile elements and target invading nucleic acids. CRISPR clusters are transcribed and processed into CRISPR RNA (crRNA). Functions as a ssRNA-specific endoribonuclease. Involved in the integration of spacer DNA into the CRISPR cassette. Plasmid targeted by CRISPR locus P1 transform wild-type cells very poorly. This chain is CRISPR-associated endoribonuclease Cas2, found in Haloferax volcanii (strain ATCC 29605 / DSM 3757 / JCM 8879 / NBRC 14742 / NCIMB 2012 / VKM B-1768 / DS2) (Halobacterium volcanii).